Reading from the N-terminus, the 313-residue chain is MKNYQFSTALLSSQIQGKKLRFPCPAKINLFLYITSQRPDGYHELQTLFQFLNFGDWLSIEIRTDGKIILTSEIPHLKNEDNLIYRAAKLLQQKTGCTLGANLHLDKILPIGGGVGGGSSNAATALVALNYLWNTQLSLSTLAEIGLQLGADVPVFVYGKAAFAEGVGEKLTFCQPPQKWFLVLKPETSISTAIIFKDPNLPRNTPKRPLAELLITKYENDCEKVVLNHYSEVEEALGWLLQYAPARLTGTGACVFAEFANEQAAQSAFLDKPEKYVGFVAQGTNISPLHQMIEYLSQQKQTLCLPNNTNSRG.

K27 is a catalytic residue. ATP is bound at residue 110–120; that stretch reads PIGGGVGGGSS. Residue D152 is part of the active site.

It belongs to the GHMP kinase family. IspE subfamily.

It carries out the reaction 4-CDP-2-C-methyl-D-erythritol + ATP = 4-CDP-2-C-methyl-D-erythritol 2-phosphate + ADP + H(+). It functions in the pathway isoprenoid biosynthesis; isopentenyl diphosphate biosynthesis via DXP pathway; isopentenyl diphosphate from 1-deoxy-D-xylulose 5-phosphate: step 3/6. Functionally, catalyzes the phosphorylation of the position 2 hydroxy group of 4-diphosphocytidyl-2C-methyl-D-erythritol. This is 4-diphosphocytidyl-2-C-methyl-D-erythritol kinase from Histophilus somni (strain 129Pt) (Haemophilus somnus).